Here is a 380-residue protein sequence, read N- to C-terminus: Tetraacyldisaccharide 4'-kinase (380 aa).

51–58 (SVGGTGKT) lines the ATP pocket.

The protein belongs to the LpxK family.

The catalysed reaction is a lipid A disaccharide + ATP = a lipid IVA + ADP + H(+). Its pathway is glycolipid biosynthesis; lipid IV(A) biosynthesis; lipid IV(A) from (3R)-3-hydroxytetradecanoyl-[acyl-carrier-protein] and UDP-N-acetyl-alpha-D-glucosamine: step 6/6. Transfers the gamma-phosphate of ATP to the 4'-position of a tetraacyldisaccharide 1-phosphate intermediate (termed DS-1-P) to form tetraacyldisaccharide 1,4'-bis-phosphate (lipid IVA). This is Tetraacyldisaccharide 4'-kinase from Bacteroides thetaiotaomicron (strain ATCC 29148 / DSM 2079 / JCM 5827 / CCUG 10774 / NCTC 10582 / VPI-5482 / E50).